A 210-amino-acid polypeptide reads, in one-letter code: Small ribosomal subunit protein bS6 (210 aa).

A disordered region spans residues 99 to 210 (PLPTKRNTKS…KDTKEVKEEG (112 aa)). Residues 120–210 (NDTKEVKEAK…KDTKEVKEEG (91 aa)) are compositionally biased toward basic and acidic residues.

This sequence belongs to the bacterial ribosomal protein bS6 family.

Binds together with bS18 to 16S ribosomal RNA. The sequence is that of Small ribosomal subunit protein bS6 from Prochlorococcus marinus (strain SARG / CCMP1375 / SS120).